A 685-amino-acid chain; its full sequence is Sodium-dependent phosphate transporter 1-B (685 aa).

A run of 6 helical transmembrane segments spans residues 21–41 (IMAP…VLAF), 66–86 (ACIL…AKVS), 106–126 (LMAG…AASF), 162–182 (IVLS…LLFF), 207–227 (ACTI…LLGF), and 234–254 (GIIL…WFFV). The disordered stretch occupies residues 489 to 511 (EGCIEDVVTDRKSSSSSLEERHD). Residues 496–511 (VTDRKSSSSSLEERHD) show a composition bias toward basic and acidic residues. 4 consecutive transmembrane segments (helical) span residues 517–537 (VSLL…FAHG), 565–585 (ATPI…LWVW), 606–626 (FSIE…GLPI), and 656–676 (IFLA…GIMA).

It belongs to the inorganic phosphate transporter (PiT) (TC 2.A.20) family.

The protein localises to the membrane. Its function is as follows. Sodium-phosphate symporter which plays a fundamental housekeeping role in phosphate transport. This Xenopus laevis (African clawed frog) protein is Sodium-dependent phosphate transporter 1-B (slc20a1-b).